A 204-amino-acid polypeptide reads, in one-letter code: Pro-glucagon (204 aa).

The N-terminal stretch at 1 to 20 (MTSMYFVAGLLLMIVQGSWQ) is a signal peptide. The propeptide occupies 84–109 (SGQQGVEEREKENLLDQLSSNGLARH). The residue at position 145 (Arg145) is an Arginine amide. 2 consecutive propeptides follow at residues 149–161 (DFLE…DDIG) and 197–204 (RDLLGEYQ).

Belongs to the glucagon family. In terms of tissue distribution, isoform LPII is expressed in both pancreas and intestine. Expression of isoform LPI is restricted to the pancreas. Neither isoform is detected in salivary glands.

The protein localises to the secreted. Plays a key role in glucose metabolism and homeostasis. Regulates blood glucose by increasing gluconeogenesis and decreasing glycolysis. Functionally, potent stimulator of glucose-dependent insulin release. Plays important roles on gastric motility and the suppression of plasma glucagon levels. In terms of biological role, stimulates intestinal growth and up-regulates villus height in the small intestine, concomitant with increased crypt cell proliferation and decreased enterocyte apoptosis. This chain is Pro-glucagon (GCG), found in Heloderma suspectum (Gila monster).